A 2173-amino-acid polypeptide reads, in one-letter code: Mediator of RNA polymerase II transcription subunit 12 (2173 aa).

Disordered regions lie at residues 1 to 34 (MAAF…QKED), 318 to 345 (GGHQ…AGGN), 630 to 718 (ASNS…KGMD), 784 to 804 (KSTA…KPEA), 1380 to 1404 (MNSS…NSAS), 1443 to 1467 (ELEK…KSMS), 1737 to 1780 (EEEP…VKQE), and 2020 to 2068 (QGIH…FRPQ). Over residues 702-717 (QAQEQESKSTAKDKGM) the composition is skewed to basic and acidic residues. The segment covering 1389–1404 (GSAVSGSSVSNSNSAS) has biased composition (low complexity). Composition is skewed to basic and acidic residues over residues 1443–1462 (ELEK…DRQK) and 1747–1759 (EPDK…KVEK). Low complexity predominate over residues 2034 to 2057 (QQQQQQQQQQQQQQQQQQVHQQQQ).

This sequence belongs to the Mediator complex subunit 12 family. In terms of assembly, component of the Mediator complex.

It localises to the nucleus. In terms of biological role, component of the Mediator complex, a coactivator involved in regulated gene transcription of nearly all RNA polymerase II-dependent genes. Mediator functions as a bridge to convey information from gene-specific regulatory proteins to the basal RNA polymerase II transcription machinery. Mediator is recruited to promoters by direct interactions with regulatory proteins and serves as a scaffold for the assembly of a functional preinitiation complex with RNA polymerase II and the general transcription factors. Required for development of the body axis, brain, ear, kidney, forelimb and neural crest and for pigmentation. Acts as a coactivator for sox9a and/or sox9b promoting the expression of several neuronal determination genes. In Danio rerio (Zebrafish), this protein is Mediator of RNA polymerase II transcription subunit 12 (med12).